A 294-amino-acid polypeptide reads, in one-letter code: Lipoyl synthase 1 (294 aa).

Residues Cys38, Cys43, Cys49, Cys64, Cys68, Cys71, and Ser279 each contribute to the [4Fe-4S] cluster site. In terms of domain architecture, Radical SAM core spans 50–268 (FAGGTATFLI…EEGQTRFGFL (219 aa)).

Belongs to the radical SAM superfamily. Lipoyl synthase family. Requires [4Fe-4S] cluster as cofactor.

The protein localises to the cytoplasm. It catalyses the reaction [[Fe-S] cluster scaffold protein carrying a second [4Fe-4S](2+) cluster] + N(6)-octanoyl-L-lysyl-[protein] + 2 oxidized [2Fe-2S]-[ferredoxin] + 2 S-adenosyl-L-methionine + 4 H(+) = [[Fe-S] cluster scaffold protein] + N(6)-[(R)-dihydrolipoyl]-L-lysyl-[protein] + 4 Fe(3+) + 2 hydrogen sulfide + 2 5'-deoxyadenosine + 2 L-methionine + 2 reduced [2Fe-2S]-[ferredoxin]. It functions in the pathway protein modification; protein lipoylation via endogenous pathway; protein N(6)-(lipoyl)lysine from octanoyl-[acyl-carrier-protein]: step 2/2. Functionally, catalyzes the radical-mediated insertion of two sulfur atoms into the C-6 and C-8 positions of the octanoyl moiety bound to the lipoyl domains of lipoate-dependent enzymes, thereby converting the octanoylated domains into lipoylated derivatives. This is Lipoyl synthase 1 from Prochlorococcus marinus (strain SARG / CCMP1375 / SS120).